Here is a 234-residue protein sequence, read N- to C-terminus: Thiamine-phosphate synthase (234 aa).

4-amino-2-methyl-5-(diphosphooxymethyl)pyrimidine contacts are provided by residues 65–69 (QYRNK) and asparagine 97. 2 residues coordinate Mg(2+): aspartate 98 and aspartate 117. Serine 136 is a 4-amino-2-methyl-5-(diphosphooxymethyl)pyrimidine binding site. 163–165 (SHT) is a 2-[(2R,5Z)-2-carboxy-4-methylthiazol-5(2H)-ylidene]ethyl phosphate binding site. 4-amino-2-methyl-5-(diphosphooxymethyl)pyrimidine is bound at residue lysine 166. 2-[(2R,5Z)-2-carboxy-4-methylthiazol-5(2H)-ylidene]ethyl phosphate is bound by residues glycine 192 and 212 to 213 (IS).

The protein belongs to the thiamine-phosphate synthase family. Mg(2+) serves as cofactor.

The catalysed reaction is 2-[(2R,5Z)-2-carboxy-4-methylthiazol-5(2H)-ylidene]ethyl phosphate + 4-amino-2-methyl-5-(diphosphooxymethyl)pyrimidine + 2 H(+) = thiamine phosphate + CO2 + diphosphate. It catalyses the reaction 2-(2-carboxy-4-methylthiazol-5-yl)ethyl phosphate + 4-amino-2-methyl-5-(diphosphooxymethyl)pyrimidine + 2 H(+) = thiamine phosphate + CO2 + diphosphate. It carries out the reaction 4-methyl-5-(2-phosphooxyethyl)-thiazole + 4-amino-2-methyl-5-(diphosphooxymethyl)pyrimidine + H(+) = thiamine phosphate + diphosphate. It functions in the pathway cofactor biosynthesis; thiamine diphosphate biosynthesis; thiamine phosphate from 4-amino-2-methyl-5-diphosphomethylpyrimidine and 4-methyl-5-(2-phosphoethyl)-thiazole: step 1/1. Condenses 4-methyl-5-(beta-hydroxyethyl)thiazole monophosphate (THZ-P) and 2-methyl-4-amino-5-hydroxymethyl pyrimidine pyrophosphate (HMP-PP) to form thiamine monophosphate (TMP). The protein is Thiamine-phosphate synthase of Xylella fastidiosa (strain 9a5c).